We begin with the raw amino-acid sequence, 128 residues long: Glycine cleavage system H protein (128 aa).

One can recognise a Lipoyl-binding domain in the interval 22–104 (TVLVGITDYA…YGEGWIFRLK (83 aa)). Lys63 carries the N6-lipoyllysine modification.

This sequence belongs to the GcvH family. As to quaternary structure, the glycine cleavage system is composed of four proteins: P, T, L and H. (R)-lipoate is required as a cofactor.

In terms of biological role, the glycine cleavage system catalyzes the degradation of glycine. The H protein shuttles the methylamine group of glycine from the P protein to the T protein. In Thermus thermophilus (strain ATCC BAA-163 / DSM 7039 / HB27), this protein is Glycine cleavage system H protein.